Here is a 320-residue protein sequence, read N- to C-terminus: Ferrochelatase (320 aa).

Residues His-194 and Glu-275 each coordinate Fe cation.

Belongs to the ferrochelatase family. In terms of assembly, monomer.

The protein localises to the cytoplasm. It carries out the reaction heme b + 2 H(+) = protoporphyrin IX + Fe(2+). It participates in porphyrin-containing compound metabolism; protoheme biosynthesis; protoheme from protoporphyrin-IX: step 1/1. Functionally, catalyzes the ferrous insertion into protoporphyrin IX. This Salmonella arizonae (strain ATCC BAA-731 / CDC346-86 / RSK2980) protein is Ferrochelatase.